A 245-amino-acid polypeptide reads, in one-letter code: 1-(5-phosphoribosyl)-5-[(5-phosphoribosylamino)methylideneamino] imidazole-4-carboxamide isomerase (245 aa).

Catalysis depends on Asp-7, which acts as the Proton acceptor. Residue Asp-129 is the Proton donor of the active site.

The protein belongs to the HisA/HisF family.

It localises to the cytoplasm. It catalyses the reaction 1-(5-phospho-beta-D-ribosyl)-5-[(5-phospho-beta-D-ribosylamino)methylideneamino]imidazole-4-carboxamide = 5-[(5-phospho-1-deoxy-D-ribulos-1-ylimino)methylamino]-1-(5-phospho-beta-D-ribosyl)imidazole-4-carboxamide. The protein operates within amino-acid biosynthesis; L-histidine biosynthesis; L-histidine from 5-phospho-alpha-D-ribose 1-diphosphate: step 4/9. This is 1-(5-phosphoribosyl)-5-[(5-phosphoribosylamino)methylideneamino] imidazole-4-carboxamide isomerase from Buchnera aphidicola subsp. Cinara cedri (strain Cc).